The chain runs to 153 residues: Arginine repressor (153 aa).

The protein belongs to the ArgR family.

The protein localises to the cytoplasm. It participates in amino-acid biosynthesis; L-arginine biosynthesis [regulation]. In terms of biological role, regulates arginine biosynthesis genes. This is Arginine repressor from Actinobacillus pleuropneumoniae serotype 3 (strain JL03).